Here is a 304-residue protein sequence, read N- to C-terminus: Probable aspartoacylase (304 aa).

Positions 13 and 16 each coordinate Zn(2+). Substrate contacts are provided by residues Arg55 and Asn62–Arg63. His104 is a binding site for Zn(2+). The substrate site is built by Glu162 and Tyr272.

This sequence belongs to the AspA/AstE family. Aspartoacylase subfamily. The cofactor is Zn(2+).

The catalysed reaction is an N-acyl-L-aspartate + H2O = a carboxylate + L-aspartate. This Synechococcus sp. (strain CC9605) protein is Probable aspartoacylase.